Consider the following 413-residue polypeptide: Gamma-glutamyl phosphate reductase (413 aa).

The protein belongs to the gamma-glutamyl phosphate reductase family.

The protein localises to the cytoplasm. It catalyses the reaction L-glutamate 5-semialdehyde + phosphate + NADP(+) = L-glutamyl 5-phosphate + NADPH + H(+). Its pathway is amino-acid biosynthesis; L-proline biosynthesis; L-glutamate 5-semialdehyde from L-glutamate: step 2/2. Catalyzes the NADPH-dependent reduction of L-glutamate 5-phosphate into L-glutamate 5-semialdehyde and phosphate. The product spontaneously undergoes cyclization to form 1-pyrroline-5-carboxylate. This Rhodococcus jostii (strain RHA1) protein is Gamma-glutamyl phosphate reductase.